The chain runs to 279 residues: Shikimate dehydrogenase (NADP(+)) (279 aa).

Shikimate contacts are provided by residues 19 to 21 and Thr66; that span reads SRS. The Proton acceptor role is filled by Lys70. Shikimate contacts are provided by Asn91 and Asp106. Residues 129–133 and Phe222 each bind NADP(+); that span reads GAGGA. Tyr224 contacts shikimate. Residue Gly243 participates in NADP(+) binding.

This sequence belongs to the shikimate dehydrogenase family. As to quaternary structure, homodimer.

It carries out the reaction shikimate + NADP(+) = 3-dehydroshikimate + NADPH + H(+). It functions in the pathway metabolic intermediate biosynthesis; chorismate biosynthesis; chorismate from D-erythrose 4-phosphate and phosphoenolpyruvate: step 4/7. In terms of biological role, involved in the biosynthesis of the chorismate, which leads to the biosynthesis of aromatic amino acids. Catalyzes the reversible NADPH linked reduction of 3-dehydroshikimate (DHSA) to yield shikimate (SA). The sequence is that of Shikimate dehydrogenase (NADP(+)) from Anaeromyxobacter sp. (strain Fw109-5).